The primary structure comprises 785 residues: MASVQDIGLSAAINLLSAFAFLFAFAMLRLQPVNDRVYFPKWYLKGIRGSPTRSRGIMTRFVNLDWTTYVKFLNWMPAALQMPEPELIEHAGLDSAVYIRIYLLGLKMFVPITLLAFGVLVPVNWTGETLENIDDLTFSNVDKLSISNVPPGSPRFWAHITMTYVITFWTCYILYMEYKAVANMRLRHLAAESRRPDQLTVLVRNVPPDPDESVNEHVEHFFCVNHPDHYLCHQVVYNANDLAKLVAQRKAMQNWLTYYENKFERKPSSRPTTKTGYGGFWGTTVDAIDFYTSKMDILAEQEAVEREKIMNDPKAIMPAAFVSFRSRWGTAVCAQTQQCHNPTIWLTEWAPEPRDVFWDNLAIPYVELSIRRLLTTVALFFLIFCFMIPIAFVQSLANLEGIQKVLPFLKPVIEMKTVKSVIQGFLPGIALKIFLIILPTILMTMSQIEGYTSLSYLDRRSAEKYFWFIIVNVFLGSIITGTAFQQLKSFLEQPPTEIPKTVGVSIPMKATFFITYIMVDGWAGIAAEILRVVPLVIFHLKNTFLVKTEQDRQQAMDPGHLDFATSEPRIQFYFLLGLVYAAVAPILLPFIIVFFAFAYVVFRHQVINVYDQKYESGARYWPDVHRRLIICLIISQLLMMGLLSTKKFAKVTALLLPQPILTFWFYRYCAGRFESAFSKFPLQEAMVKDTLEKATEPNLNLKEYLKDAYVHPVFKGNDFDRPRVVDEEESNPLVRTKRTSQGTTRYNSEASSSATTTPVANNDSPRCWGTKIGSFGCVIVVSYSC.

Residues 7 to 27 (IGLSAAINLLSAFAFLFAFAM) traverse the membrane as a helical segment. At serine 54 the chain carries Phosphoserine. The next 9 membrane-spanning stretches (helical) occupy residues 101 to 121 (IYLLGLKMFVPITLLAFGVLV), 156 to 176 (FWAHITMTYVITFWTCYILYM), 373 to 393 (LLTTVALFFLIFCFMIPIAFV), 425 to 445 (FLPGIALKIFLIILPTILMTM), 465 to 485 (YFWFIIVNVFLGSIITGTAFQ), 510 to 530 (ATFFITYIMVDGWAGIAAEIL), 582 to 602 (AVAPILLPFIIVFFAFAYVVF), 628 to 648 (LIICLIISQLLMMGLLSTKKF), and 651 to 671 (VTALLLPQPILTFWFYRYCAG). The segment at 725–761 (VDEEESNPLVRTKRTSQGTTRYNSEASSSATTTPVAN) is disordered. Residues 739–761 (TSQGTTRYNSEASSSATTTPVAN) are compositionally biased toward polar residues.

Belongs to the CSC1 (TC 1.A.17) family. Post-translationally, phosphorylated and activated by BIK1.

The protein resides in the membrane. The enzyme catalyses Ca(2+)(in) = Ca(2+)(out). Functionally, calcium-permeable channel involved in plant stomatal immunity. The sequence is that of Hyperosmolality-gated Ca2+ permeable channel 1.7 from Arabidopsis thaliana (Mouse-ear cress).